Here is a 283-residue protein sequence, read N- to C-terminus: Phosphate import ATP-binding protein PstB 1 (283 aa).

Positions 1–16 (MSSDDTTDPTADDESF) are enriched in acidic residues. The interval 1 to 35 (MSSDDTTDPTADDESFTDSPVAGLEQSTTTRGSGR) is disordered. Residues 38–278 (ISARNINVWY…PSSERVENYI (241 aa)) form the ABC transporter domain. An ATP-binding site is contributed by 70 to 77 (GPSGCGKS).

The protein belongs to the ABC transporter superfamily. Phosphate importer (TC 3.A.1.7) family. In terms of assembly, the complex is composed of two ATP-binding proteins (PstB), two transmembrane proteins (PstC and PstA) and a solute-binding protein (PstS).

It is found in the cell membrane. The catalysed reaction is phosphate(out) + ATP + H2O = ADP + 2 phosphate(in) + H(+). In terms of biological role, part of the ABC transporter complex PstSACB involved in phosphate import. Responsible for energy coupling to the transport system. The protein is Phosphate import ATP-binding protein PstB 1 of Natronomonas pharaonis (strain ATCC 35678 / DSM 2160 / CIP 103997 / JCM 8858 / NBRC 14720 / NCIMB 2260 / Gabara) (Halobacterium pharaonis).